A 336-amino-acid polypeptide reads, in one-letter code: Phospholipase A1 (336 aa).

Residues 1–27 (MEENMNLKYLLLFVYFVQVLNCCYGHG) form the signal peptide. The propeptide occupies 28–36 (DPLSYELDR). The cysteines at positions 40 and 123 are disulfide-linked. S173 functions as the Nucleophile in the catalytic mechanism. Catalysis depends on D201, which acts as the Charge relay system. Intrachain disulfides connect C212–C217 and C255–C263. The active-site Charge relay system is the H265. 3 disulfides stabilise this stretch: C280-C304, C281-C329, and C297-C302.

The protein belongs to the AB hydrolase superfamily. Lipase family. As to expression, expressed by the venom gland.

The protein localises to the secreted. It carries out the reaction a 1,2-diacyl-sn-glycero-3-phosphocholine + H2O = a 2-acyl-sn-glycero-3-phosphocholine + a fatty acid + H(+). Functionally, catalyzes the hydrolysis of phosphatidylcholine with phospholipase A1 activity. Induces hemolytic activity. Acts as an allergen. The sequence is that of Phospholipase A1 from Vespula vulgaris (Yellow jacket).